A 465-amino-acid polypeptide reads, in one-letter code: Sodium-dependent phosphate transport protein 1 (465 aa).

Residues Asn-47 and Asn-56 are each glycosylated (N-linked (GlcNAc...) asparagine). 10 helical membrane passes run 79–99 (GIIF…VGYI), 109–129 (IGFA…AAAV), 171–191 (MSLS…GIIC), 198–218 (MVFY…FVLY), 255–275 (AMIK…YLWT), 304–324 (LPYL…DFLM), 337–357 (LFTA…LYLS), 363–383 (TITF…GALI), 399–419 (VTTL…GLFL), and 428–448 (FKIF…YLIF).

This sequence belongs to the major facilitator superfamily. Sodium/anion cotransporter family. As to quaternary structure, interacts with PDZK1. Kidney cortex and liver.

Its subcellular location is the apical cell membrane. The catalysed reaction is 3 Na(+)(out) + phosphate(out) = 3 Na(+)(in) + phosphate(in). It catalyses the reaction urate(out) = urate(in). In terms of biological role, important for the resorption of phosphate by the kidney. May be involved in actively transporting phosphate into cells via Na(+) cotransport in the renal brush border membrane. Plays a role in urate transport in the kidney. This Oryctolagus cuniculus (Rabbit) protein is Sodium-dependent phosphate transport protein 1 (SLC17A1).